The primary structure comprises 518 residues: 2-isopropylmalate synthase (518 aa).

One can recognise a Pyruvate carboxyltransferase domain in the interval 5–269; that stretch reads IIVLDTTLRD…STNVRLKELI (265 aa). Mn(2+)-binding residues include Asp14, His204, His206, and Asn240. Positions 397–518 are regulatory domain; sequence ELDSFQVVTN…HDSQAPVSAR (122 aa).

This sequence belongs to the alpha-IPM synthase/homocitrate synthase family. LeuA type 1 subfamily. In terms of assembly, homodimer. Requires Mn(2+) as cofactor.

The protein resides in the cytoplasm. The enzyme catalyses 3-methyl-2-oxobutanoate + acetyl-CoA + H2O = (2S)-2-isopropylmalate + CoA + H(+). It participates in amino-acid biosynthesis; L-leucine biosynthesis; L-leucine from 3-methyl-2-oxobutanoate: step 1/4. Catalyzes the condensation of the acetyl group of acetyl-CoA with 3-methyl-2-oxobutanoate (2-ketoisovalerate) to form 3-carboxy-3-hydroxy-4-methylpentanoate (2-isopropylmalate). The chain is 2-isopropylmalate synthase from Geobacillus sp. (strain Y412MC10).